Consider the following 458-residue polypeptide: Biphenyl dioxygenase subunit alpha (458 aa).

Residues 58-156 (WLLLGHESHV…KEGDCGFDKA (99 aa)) enclose the Rieske domain. [2Fe-2S] cluster-binding residues include C100, H102, C120, and H123. H233 and H239 together coordinate Fe cation.

Belongs to the bacterial ring-hydroxylating dioxygenase alpha subunit family. Heterohexamer consisting of three BphA subunits and three BphE subunits. A ferredoxin (BphF) and a ferredoxin reductase (BphG) must be present to obtain activity. Requires [2Fe-2S] cluster as cofactor. Fe cation serves as cofactor.

The enzyme catalyses biphenyl + NADH + O2 + H(+) = (2R,3S)-3-phenylcyclohexa-3,5-diene-1,2-diol + NAD(+). It functions in the pathway xenobiotic degradation; biphenyl degradation; 2-hydroxy-2,4-pentadienoate and benzoate from biphenyl: step 1/4. This is Biphenyl dioxygenase subunit alpha (bphA) from Metapseudomonas furukawaii (Pseudomonas furukawaii).